The following is a 156-amino-acid chain: Male-specific protein scotti (156 aa).

The disordered stretch occupies residues 26-48; sequence TADAGDDADTLEDGQQQQQQQHQ. Asn-137 is a glycosylation site (N-linked (GlcNAc...) asparagine).

Belongs to the male-specific scotti family.

In terms of biological role, post-meiotically transcribed gene that has a role in late spermiogenesis; required for actin cone progression during spermatid individualization. This chain is Male-specific protein scotti, found in Drosophila erecta (Fruit fly).